Reading from the N-terminus, the 96-residue chain is Putative pterin-4-alpha-carbinolamine dehydratase (96 aa).

Belongs to the pterin-4-alpha-carbinolamine dehydratase family.

It catalyses the reaction (4aS,6R)-4a-hydroxy-L-erythro-5,6,7,8-tetrahydrobiopterin = (6R)-L-erythro-6,7-dihydrobiopterin + H2O. This chain is Putative pterin-4-alpha-carbinolamine dehydratase, found in Prochlorococcus marinus (strain MIT 9301).